A 1323-amino-acid chain; its full sequence is PAS domain-containing serine/threonine-protein kinase (1323 aa).

An N-acetylmethionine modification is found at Met1. At Ser19 the chain carries Phosphoserine. A disordered region spans residues 20–47; it reads LPLPVSAEGPAAQTTAEPSRSFSSAHRH. Over residues 31–43 the composition is skewed to polar residues; that stretch reads AQTTAEPSRSFSS. Residue Thr34 is modified to Phosphothreonine. 2 consecutive PAS domains span residues 119-190 and 335-402; these read SSPL…MEAD and YRAS…SLQL. The residue at position 582 (Ser582) is a Phosphoserine. The segment at 837-857 is disordered; the sequence is AASDRESPGHVPSTLDAGPED. Ser939 carries the post-translational modification Phosphoserine. Positions 999–1251 constitute a Protein kinase domain; sequence YSTMSPLGSG…LEKLVTDPWV (253 aa). ATP is bound by residues 1005–1013, Lys1028, and 1082–1089; these read LGSGAFGFV and EKHGSGLD. The Proton acceptor role is filled by Asp1128. Asp1146 provides a ligand contact to ATP. Thr1161 and Thr1165 each carry phosphothreonine; by autocatalysis. The tract at residues 1298–1323 is disordered; the sequence is CGGPVPGEAPNGQGCLHPGDPRLLTS.

The protein belongs to the protein kinase superfamily. CAMK Ser/Thr protein kinase family. In terms of processing, autophosphorylated on Thr-1161 and Thr-1165. Autophosphorylation is activated by phospholipids. In terms of tissue distribution, ubiquitously expressed, with slightly higher expression in brain, prostate and testis. Reduced expression was found in placenta. Present in germ cells of testis and in the midpiece of sperm tails (at protein level).

It is found in the cytoplasm. Its subcellular location is the nucleus. The enzyme catalyses L-seryl-[protein] + ATP = O-phospho-L-seryl-[protein] + ADP + H(+). It carries out the reaction L-threonyl-[protein] + ATP = O-phospho-L-threonyl-[protein] + ADP + H(+). Its activity is regulated as follows. Protein kinase activity is inhibited by the first PAS domain: binding of an unidentified ligand desinhibits the protein kinase activity. May be activated by autophosphorylation on Thr-1161 and Thr-1165. The activating role of autophosphorylation at Thr-1161 is unclear: according to a report, autophosphorylation at Thr-1161 does not play a major role in activation. Autophosphorylation is enhanced upon phosphatidylinositol monophosphate (phosphatidylinositol 4-phosphate) binding and inhibited upon phosphatidylinositol bi- and tri-phosphate binding. In contrast, phosphorylation of target proteins is inhibited upon all phosphatidylinositol-binding (phosphatidylinositol mono- bi- and tri-phosphate). Its function is as follows. Serine/threonine-protein kinase involved in energy homeostasis and protein translation. Phosphorylates EEF1A1, GYS1, PDX1 and RPS6. Probably plays a role under changing environmental conditions (oxygen, glucose, nutrition), rather than under standard conditions. Acts as a sensor involved in energy homeostasis: regulates glycogen synthase synthesis by mediating phosphorylation of GYS1, leading to GYS1 inactivation. May be involved in glucose-stimulated insulin production in pancreas and regulation of glucagon secretion by glucose in alpha cells; however such data require additional evidences. May play a role in regulation of protein translation by phosphorylating EEF1A1, leading to increase translation efficiency. May also participate in respiratory regulation. This chain is PAS domain-containing serine/threonine-protein kinase (PASK), found in Homo sapiens (Human).